We begin with the raw amino-acid sequence, 247 residues long: Adenosylcobinamide-GDP ribazoletransferase (247 aa).

The next 5 membrane-spanning stretches (helical) occupy residues 34–54 (IITFPLIGLLLGAISGLVFMV), 57–77 (AWCGAPLAALFSVLVLALMTG), 113–133 (GGLALIFVVLAKILVLSELAL), 138–158 (ILASLAAACAVSRGTAALLMY), and 194–214 (VLLLGMHGVAAMVVTMVAIFI).

This sequence belongs to the CobS family. It depends on Mg(2+) as a cofactor.

The protein resides in the cell inner membrane. It carries out the reaction alpha-ribazole + adenosylcob(III)inamide-GDP = adenosylcob(III)alamin + GMP + H(+). The enzyme catalyses alpha-ribazole 5'-phosphate + adenosylcob(III)inamide-GDP = adenosylcob(III)alamin 5'-phosphate + GMP + H(+). It functions in the pathway cofactor biosynthesis; adenosylcobalamin biosynthesis; adenosylcobalamin from cob(II)yrinate a,c-diamide: step 7/7. Its function is as follows. Joins adenosylcobinamide-GDP and alpha-ribazole to generate adenosylcobalamin (Ado-cobalamin). Also synthesizes adenosylcobalamin 5'-phosphate from adenosylcobinamide-GDP and alpha-ribazole 5'-phosphate. In Shigella flexneri serotype 5b (strain 8401), this protein is Adenosylcobinamide-GDP ribazoletransferase.